The primary structure comprises 166 residues: Lithostathine-1-alpha (166 aa).

The first 22 residues, 1-22 (MAQTSSYFMLISCLMFLSQSQG), serve as a signal peptide directing secretion. The residue at position 23 (Gln-23) is a Pyrrolidone carboxylic acid. Thr-27 is a glycosylation site (O-linked (GalNAc) threonine). Residues 34-164 (ISCPEGTNAY…EDKFSFVCKF (131 aa)) form the C-type lectin domain. 3 disulfides stabilise this stretch: Cys-36-Cys-47, Cys-64-Cys-162, and Cys-137-Cys-154.

Post-translationally, the composition of the O-linked carbohydrate on Thr-27 is complex and varied. In the crystallographic structure, the attached sugar appears to be N-acetylglucosamine, typical of an intracellular protein, rather than N-acetylgalactosamine. As to expression, in pancreatic acinar cells and, in lower levels, in brain. Enhanced expression of PSP-related transcripts and intraneuronal accumulation of PSP-like proteins is found in brain from Alzheimer disease and Down syndrome patients.

It localises to the secreted. Its function is as follows. Might act as an inhibitor of spontaneous calcium carbonate precipitation. May be associated with neuronal sprouting in brain, and with brain and pancreas regeneration. The chain is Lithostathine-1-alpha (REG1A) from Homo sapiens (Human).